Here is a 609-residue protein sequence, read N- to C-terminus: UvrABC system protein C (609 aa).

Residues 19–97 enclose the GIY-YIG domain; the sequence is ASPGCYLWKS…IKKHNPRFNV (79 aa). The UVR domain maps to 208–243; that stretch reads ESLVSDLNIKMSNASERLDFEKAARYRDMLQRIQNF.

It belongs to the UvrC family. As to quaternary structure, interacts with UvrB in an incision complex.

The protein localises to the cytoplasm. Functionally, the UvrABC repair system catalyzes the recognition and processing of DNA lesions. UvrC both incises the 5' and 3' sides of the lesion. The N-terminal half is responsible for the 3' incision and the C-terminal half is responsible for the 5' incision. This is UvrABC system protein C from Leptospira interrogans serogroup Icterohaemorrhagiae serovar Lai (strain 56601).